A 192-amino-acid chain; its full sequence is Ribonuclease HII (192 aa).

Positions 2–187 constitute an RNase H type-2 domain; the sequence is KNLCGIDEAG…KALGENEIGV (186 aa). Residues Asp8, Glu9, and Asp97 each contribute to the a divalent metal cation site.

The protein belongs to the RNase HII family. Mn(2+) serves as cofactor. Mg(2+) is required as a cofactor.

It localises to the cytoplasm. The catalysed reaction is Endonucleolytic cleavage to 5'-phosphomonoester.. Endonuclease that specifically degrades the RNA of RNA-DNA hybrids. The protein is Ribonuclease HII of Aliarcobacter butzleri (strain RM4018) (Arcobacter butzleri).